A 199-amino-acid chain; its full sequence is Dephospho-CoA kinase (199 aa).

The DPCK domain maps to 3–199 (TLGVTGGIGS…ELYWAVTGGQ (197 aa)). An ATP-binding site is contributed by 11 to 16 (GSGKTT).

This sequence belongs to the CoaE family.

It is found in the cytoplasm. It carries out the reaction 3'-dephospho-CoA + ATP = ADP + CoA + H(+). Its pathway is cofactor biosynthesis; coenzyme A biosynthesis; CoA from (R)-pantothenate: step 5/5. Functionally, catalyzes the phosphorylation of the 3'-hydroxyl group of dephosphocoenzyme A to form coenzyme A. The protein is Dephospho-CoA kinase of Salinibacter ruber (strain DSM 13855 / M31).